Here is a 390-residue protein sequence, read N- to C-terminus: O-glycoside alpha-1,2-mannosyltransferase omh1 (390 aa).

Glu279 (nucleophile) is an active-site residue.

It belongs to the glycosyltransferase 15 family.

The protein localises to the endoplasmic reticulum. It is found in the golgi apparatus. Mannosyltransferase involved in O-glycosylation of cell wall and secreted proteins. Plays a major role in extending alpha-1,2-linked mannose in the O-glycan pathway. The polypeptide is O-glycoside alpha-1,2-mannosyltransferase omh1 (omh1) (Schizosaccharomyces pombe (strain 972 / ATCC 24843) (Fission yeast)).